The primary structure comprises 714 residues: Protein BLISTER (714 aa).

Disordered regions lie at residues 1 to 113 (MASA…VDFS), 219 to 261 (SSYL…KRSR), 288 to 325 (VTSS…ASDY), and 519 to 576 (MVQK…SSNT). Over residues 8-33 (RRQEDVEAGRRKLEQFRKRKAAEKAK) the composition is skewed to basic and acidic residues. Polar residues-rich tracts occupy residues 36 to 50 (SQNT…QSVI) and 58 to 74 (SISN…TSNE). Residues 92 to 102 (DGSKERSRQDD) show a composition bias toward basic and acidic residues. Polar residues-rich tracts occupy residues 219-253 (SSYL…SAKS), 288-297 (VTSSGSQLSG), 313-322 (NGPSSLTSGA), and 519-561 (MVQK…SSNQ). Positions 356 to 525 (NDDFTALEQH…LQTMVQKASS (170 aa)) form a coiled coil. Over residues 562–576 (ETDSTTLLESDSSNT) the composition is skewed to low complexity.

In terms of assembly, interacts with CLF. As to expression, expressed in root tips, emerging lateral roots, shoot apical meristem (SAM), vasculature of cotyledons, leaves, sepals and carpels.

It localises to the nucleus. It is found in the cytoplasm. Functionally, is required for normal leaf, flower and seed development and controls cotyledon and leaf patterning by inhibiting premature differentiation. Regulates the expression of a subset of PcG target genes. Is required for the repression of the floral specific genes PI, SEP2, and SEP3, but also for the activation of FLC. Involved in response to cold. Involved in the regulation of COR15A, COR15B, BAM3 and AMY3 transcripts, and ascorbate levels in response to prolonged chilling temperatures. The chain is Protein BLISTER from Arabidopsis thaliana (Mouse-ear cress).